The sequence spans 275 residues: Nitrogenase iron protein 1 (275 aa).

9-16 (GKGGIGKS) provides a ligand contact to ATP. Residue C98 participates in [4Fe-4S] cluster binding. R101 carries the ADP-ribosylarginine; by dinitrogenase reductase ADP-ribosyltransferase modification. C132 contributes to the [4Fe-4S] cluster binding site.

It belongs to the NifH/BchL/ChlL family. Homodimer. The cofactor is [4Fe-4S] cluster. The reversible ADP-ribosylation of Arg-101 inactivates the nitrogenase reductase and regulates nitrogenase activity.

It carries out the reaction N2 + 8 reduced [2Fe-2S]-[ferredoxin] + 16 ATP + 16 H2O = H2 + 8 oxidized [2Fe-2S]-[ferredoxin] + 2 NH4(+) + 16 ADP + 16 phosphate + 6 H(+). The key enzymatic reactions in nitrogen fixation are catalyzed by the nitrogenase complex, which has 2 components: the iron protein and the molybdenum-iron protein. The chain is Nitrogenase iron protein 1 (nifH1) from Methanobacterium ivanovii.